The primary structure comprises 253 residues: Hydroxyacylglutathione hydrolase (253 aa).

Residues His54, His56, Asp58, His59, His112, Asp131, and His169 each contribute to the Zn(2+) site.

Belongs to the metallo-beta-lactamase superfamily. Glyoxalase II family. Monomer. Zn(2+) serves as cofactor.

It carries out the reaction an S-(2-hydroxyacyl)glutathione + H2O = a 2-hydroxy carboxylate + glutathione + H(+). Its pathway is secondary metabolite metabolism; methylglyoxal degradation; (R)-lactate from methylglyoxal: step 2/2. Its function is as follows. Thiolesterase that catalyzes the hydrolysis of S-D-lactoyl-glutathione to form glutathione and D-lactic acid. The sequence is that of Hydroxyacylglutathione hydrolase from Bartonella quintana (strain Toulouse) (Rochalimaea quintana).